A 132-amino-acid polypeptide reads, in one-letter code: Small ribosomal subunit protein uS8 (132 aa).

The protein belongs to the universal ribosomal protein uS8 family. In terms of assembly, part of the 30S ribosomal subunit. Contacts proteins S5 and S12.

In terms of biological role, one of the primary rRNA binding proteins, it binds directly to 16S rRNA central domain where it helps coordinate assembly of the platform of the 30S subunit. In Arthrobacter sp. (strain FB24), this protein is Small ribosomal subunit protein uS8.